Consider the following 184-residue polypeptide: Shikimate kinase (184 aa).

17-22 (GAGKTT) is a binding site for ATP. Residue T21 coordinates Mg(2+). Substrate-binding residues include D39, R63, and G85. R123 provides a ligand contact to ATP. R142 contacts substrate.

It belongs to the shikimate kinase family. In terms of assembly, monomer. Mg(2+) serves as cofactor.

Its subcellular location is the cytoplasm. It catalyses the reaction shikimate + ATP = 3-phosphoshikimate + ADP + H(+). Its pathway is metabolic intermediate biosynthesis; chorismate biosynthesis; chorismate from D-erythrose 4-phosphate and phosphoenolpyruvate: step 5/7. Its function is as follows. Catalyzes the specific phosphorylation of the 3-hydroxyl group of shikimic acid using ATP as a cosubstrate. The protein is Shikimate kinase of Burkholderia pseudomallei (strain 1710b).